Consider the following 498-residue polypeptide: ATP synthase subunit beta, chloroplastic (498 aa).

Gly172 to Thr179 contacts ATP.

This sequence belongs to the ATPase alpha/beta chains family. As to quaternary structure, F-type ATPases have 2 components, CF(1) - the catalytic core - and CF(0) - the membrane proton channel. CF(1) has five subunits: alpha(3), beta(3), gamma(1), delta(1), epsilon(1). CF(0) has four main subunits: a(1), b(1), b'(1) and c(9-12).

Its subcellular location is the plastid. The protein localises to the chloroplast thylakoid membrane. The catalysed reaction is ATP + H2O + 4 H(+)(in) = ADP + phosphate + 5 H(+)(out). In terms of biological role, produces ATP from ADP in the presence of a proton gradient across the membrane. The catalytic sites are hosted primarily by the beta subunits. This Pelargonium hortorum (Common geranium) protein is ATP synthase subunit beta, chloroplastic.